The following is an 855-amino-acid chain: MASFPETDFQICLLCKEMCGSPAPLSSNSSASSSSSQTSTSSAGGGGPGAAARRLHVLPCLHAFCRPCLEAHRLPAPGGAGPAEALKLRCPVCDQKVVLAEAAGMDALPSSAFLLSNLLDAVVATAEEPPPKNGRAGGGPGGAGGHSNHRHHAHHPAQRAAAPAPQPPPGPAASPGSLLMRRPHGCSSCDEGNAASSRCLDCQEHLCDNCVRAHQRVRLTKDHYIERGPPGPAAASAAQQLGLGPPFAGAPFSILSVFPERLGFCQHHDDEVLHLYCDTCSVPICRECTLGRHGGHSFAYLQDALQDSRALTIQLLADAQQGRQALQLSIEQAQTVAEQVEMKAKVVQSEVKAVTARHKKALEDRECELLWKVEKIRQVKAKSLFLQVEKLRQSLSKLESTISAVQQVLEEGRALDILLARDRMLAQVQELKTIRGLLQPQEDDRIMFTPPDQALYLALKSIGFVSSGAFAPLTKATGDGIKRALQGKVASFTVMGYDHDGEPRHSGGDLMSVVVLGPDGNLFGAEVSDQQNGTYIVSYRPQLEGEHLVSVTLYNQHIENSPFKVVVKSGRSYVGIGLPGLSFGSEGDGEGKLCRPWGVSVDKEGFIIVADRSNNRIQVFKPCGSFHHKFGTLGSRPGQFDRPAGVACDASRRIIVADKDNHRIQIFTFEGQFLLKFGEKGTKNGQFNYPWDVAVNSEGKILVSDTRNHRIQLFGPDGVFLNKYGFEGSLWKHFDSPRGVAFNNEGHLVVTDFNNHRLLVIHPDCQSARFLGSEGSGNGQFLRPQGVAVDQEGRIIVADSRNHRVQMFEANGSFLCKFGAQGSGFGQMDRPSGIAVTPDGLIVVVDFGNNRILIF.

Position 2 is an N-acetylalanine (Ala2). The segment at 12–94 (CLLCKEMCGS…ALKLRCPVCD (83 aa)) adopts an RING-type zinc-finger fold. A compositionally biased stretch (low complexity) spans 26–42 (SSNSSASSSSSQTSTSS). Disordered regions lie at residues 26-48 (SSNSSASSSSSQTSTSSAGGGGP) and 127-177 (EEPP…SPGS). Gly residues predominate over residues 135–145 (RAGGGPGGAGG). A compositionally biased stretch (basic residues) spans 147 to 157 (SNHRHHAHHPA). The B box-type 1; atypical zinc-finger motif lies at 181 to 228 (RRPHGCSSCDEGNAASSRCLDCQEHLCDNCVRAHQRVRLTKDHYIERG). The segment at 260-301 (ERLGFCQHHDDEVLHLYCDTCSVPICRECTLGRHGGHSFAYL) adopts a B box-type 2 zinc-finger fold. Zn(2+) is bound by residues Cys265, His268, Cys288, and His293. Coiled-coil stretches lie at residues 314–352 (QLLADAQQGRQALQLSIEQAQTVAEQVEMKAKVVQSEVK) and 378–411 (QVKAKSLFLQVEKLRQSLSKLESTISAVQQVLEE). One copy of the Filamin repeat lies at 466–567 (SSGAFAPLTK…IENSPFKVVV (102 aa)). NHL repeat units follow at residues 580 to 623 (GLSF…FKPC), 627 to 670 (HHKF…FTFE), 674 to 717 (LLKF…FGPD), 721 to 764 (LNKY…IHPD), 768 to 811 (ARFL…FEAN), and 815 to 855 (LCKF…ILIF).

Belongs to the TRIM/RBCC family. As to quaternary structure, interacts (via NHL repeats) with AGO2; the interaction increases in presence of RNA. Interacts with HSP90AA1. Interacts (via NHL repeats) with MOV10, PABPC1, PUM1, PUM2, STAU2, XRN1 and XRN2 in an RNA-dependent manner. Interacts with SHCBP1; leading to enhance its stability. In terms of processing, autoubiquitinated. As to expression, highly expressed in undifferentiated embryonic stem cells (ESCs). Expressed in the epiblast and in interfollicular epidermal stem cells during early development. Also expressed in male germ cells and in the reproductive tract. Highly expressed in neuroepithelial cells, and its expression declines as neurogenesis proceeds (at protein level). Expressed in ependymal cells of the brain.

Its subcellular location is the cytoplasm. The protein resides in the P-body. The enzyme catalyses S-ubiquitinyl-[E2 ubiquitin-conjugating enzyme]-L-cysteine + [acceptor protein]-L-lysine = [E2 ubiquitin-conjugating enzyme]-L-cysteine + N(6)-ubiquitinyl-[acceptor protein]-L-lysine.. It functions in the pathway protein modification; protein ubiquitination. Its function is as follows. E3 ubiquitin-protein ligase that cooperates with the microRNAs (miRNAs) machinery and promotes embryonic stem cells proliferation and maintenance. Binds to miRNAs and associates with AGO2, participating in post-transcriptional repression of transcripts such as CDKN1A. Facilitates the G1-S transition to promote rapid embryonic stem cell self-renewal by repressing CDKN1A expression. In addition, participates in post-transcriptional mRNA repression in a miRNA independent mechanism. Required to maintain proliferation and prevent premature differentiation of neural progenitor cells during early neural development: positively regulates FGF signaling by controlling the stability of SHCBP1. Specific regulator of miRNA biogenesis. miRNA Binds MIR29A hairpin and postranscriptionally modulates MIR29A levels, which indirectly regulates TET proteins expression. This chain is E3 ubiquitin-protein ligase TRIM71 (Trim71), found in Mus musculus (Mouse).